Reading from the N-terminus, the 202-residue chain is Small ribosomal subunit protein uS4 (202 aa).

The interval L15–R42 is disordered. Positions N90–N152 constitute an S4 RNA-binding domain.

Belongs to the universal ribosomal protein uS4 family. In terms of assembly, part of the 30S ribosomal subunit. Contacts protein S5. The interaction surface between S4 and S5 is involved in control of translational fidelity.

One of the primary rRNA binding proteins, it binds directly to 16S rRNA where it nucleates assembly of the body of the 30S subunit. Its function is as follows. With S5 and S12 plays an important role in translational accuracy. In Synechococcus sp. (strain CC9311), this protein is Small ribosomal subunit protein uS4.